We begin with the raw amino-acid sequence, 126 residues long: Iron-sulfur cluster insertion protein ErpA (126 aa).

The tract at residues 1–21 (MNQPANQFNPSSSQPVDPTVL) is disordered. Positions 54, 118, and 120 each coordinate iron-sulfur cluster.

This sequence belongs to the HesB/IscA family. As to quaternary structure, homodimer. Iron-sulfur cluster serves as cofactor.

In terms of biological role, required for insertion of 4Fe-4S clusters for at least IspG. The chain is Iron-sulfur cluster insertion protein ErpA from Psychrobacter arcticus (strain DSM 17307 / VKM B-2377 / 273-4).